We begin with the raw amino-acid sequence, 347 residues long: Quinolinate synthase (347 aa).

Iminosuccinate is bound by residues His-47 and Ser-68. Cys-113 is a binding site for [4Fe-4S] cluster. Iminosuccinate-binding positions include 139–141 (YAN) and Ser-156. Residue Cys-200 coordinates [4Fe-4S] cluster. Iminosuccinate is bound by residues 226–228 (HPE) and Thr-243. Cys-297 provides a ligand contact to [4Fe-4S] cluster.

The protein belongs to the quinolinate synthase family. Type 1 subfamily. The cofactor is [4Fe-4S] cluster.

It is found in the cytoplasm. The catalysed reaction is iminosuccinate + dihydroxyacetone phosphate = quinolinate + phosphate + 2 H2O + H(+). Its pathway is cofactor biosynthesis; NAD(+) biosynthesis; quinolinate from iminoaspartate: step 1/1. Catalyzes the condensation of iminoaspartate with dihydroxyacetone phosphate to form quinolinate. The sequence is that of Quinolinate synthase from Shigella dysenteriae serotype 1 (strain Sd197).